Consider the following 129-residue polypeptide: Small ribosomal subunit protein uS8 (129 aa).

Belongs to the universal ribosomal protein uS8 family. Part of the 30S ribosomal subunit.

Functionally, one of the primary rRNA binding proteins, it binds directly to 16S rRNA central domain where it helps coordinate assembly of the platform of the 30S subunit. The polypeptide is Small ribosomal subunit protein uS8 (Thermoplasma acidophilum (strain ATCC 25905 / DSM 1728 / JCM 9062 / NBRC 15155 / AMRC-C165)).